The sequence spans 469 residues: Adenosylhomocysteinase (469 aa).

Residues Thr-63, Asp-139, and Glu-164 each contribute to the substrate site. 165 to 167 provides a ligand contact to NAD(+); it reads TTT. Substrate-binding residues include Lys-194 and Asp-198. NAD(+) is bound by residues Asn-199, 228–233, Glu-251, Asn-300, 321–323, and Asn-375; these read GYGDVG and IGH.

The protein belongs to the adenosylhomocysteinase family. Requires NAD(+) as cofactor.

It is found in the cytoplasm. The enzyme catalyses S-adenosyl-L-homocysteine + H2O = L-homocysteine + adenosine. It participates in amino-acid biosynthesis; L-homocysteine biosynthesis; L-homocysteine from S-adenosyl-L-homocysteine: step 1/1. Its function is as follows. May play a key role in the regulation of the intracellular concentration of adenosylhomocysteine. The polypeptide is Adenosylhomocysteinase (Pseudomonas syringae pv. syringae (strain B728a)).